A 138-amino-acid polypeptide reads, in one-letter code: Thyrotropin subunit beta (138 aa).

The first 20 residues, 1–20, serve as a signal peptide directing secretion; it reads MSAAVLLSVLFALACGQAAS. Cystine bridges form between cysteine 22–cysteine 72, cysteine 36–cysteine 87, cysteine 39–cysteine 125, cysteine 47–cysteine 103, cysteine 51–cysteine 105, and cysteine 108–cysteine 115. The N-linked (GlcNAc...) asparagine glycan is linked to asparagine 43. A propeptide spanning residues 133–138 is cleaved from the precursor; sequence LGGFSV.

Belongs to the glycoprotein hormones subunit beta family. As to quaternary structure, heterodimer of a common alpha chain and a unique beta chain which confers biological specificity to thyrotropin, lutropin, follitropin and gonadotropin.

The protein localises to the secreted. Functionally, indispensable for the control of thyroid structure and metabolism. This Mus musculus (Mouse) protein is Thyrotropin subunit beta (Tshb).